The primary structure comprises 566 residues: Acetyl-coenzyme A carboxylase carboxyl transferase subunits beta/alpha (566 aa).

Positions 1–243 (MNPTTPRGGQ…QTAEFLLRHG (243 aa)) are acetyl-coenzyme A carboxylase carboxyl transferase subunit beta. Residues 11-280 (LWSRCGGCAS…PVGAGHESEC (270 aa)) form the CoA carboxyltransferase N-terminal domain. A carboxyltransferase region spans residues 11–534 (LWSRCGGCAS…REAVLAHLVP (524 aa)). Zn(2+) is bound by residues cysteine 15, cysteine 18, cysteine 34, and cysteine 37. Residues 244–557 (QVDLVVPRHA…RRRFRRFGAA (314 aa)) are acetyl-coenzyme A carboxylase carboxyl transferase subunit alpha. A disordered region spans residues 268–295 (GREPVGAGHESECPPVDGSSTQERGADK). In terms of domain architecture, CoA carboxyltransferase C-terminal spans 282-534 (PVDGSSTQER…REAVLAHLVP (253 aa)).

This sequence in the N-terminal section; belongs to the AccD/PCCB family. It in the C-terminal section; belongs to the AccA family. In terms of assembly, acetyl-CoA carboxylase is a heterotetramer composed of biotin carboxyl carrier protein (AccB), biotin carboxylase (AccC) and two subunits of ACCase subunit beta/alpha. Requires Zn(2+) as cofactor.

It is found in the cytoplasm. It catalyses the reaction N(6)-carboxybiotinyl-L-lysyl-[protein] + acetyl-CoA = N(6)-biotinyl-L-lysyl-[protein] + malonyl-CoA. It functions in the pathway lipid metabolism; malonyl-CoA biosynthesis; malonyl-CoA from acetyl-CoA: step 1/1. In terms of biological role, component of the acetyl coenzyme A carboxylase (ACC) complex. Biotin carboxylase (BC) catalyzes the carboxylation of biotin on its carrier protein (BCCP) and then the CO(2) group is transferred by the transcarboxylase to acetyl-CoA to form malonyl-CoA. The protein is Acetyl-coenzyme A carboxylase carboxyl transferase subunits beta/alpha (accD) of Salinispora tropica (strain ATCC BAA-916 / DSM 44818 / JCM 13857 / NBRC 105044 / CNB-440).